A 391-amino-acid chain; its full sequence is Succinyl-diaminopimelate desuccinylase (391 aa).

Histidine 67 serves as a coordination point for Zn(2+). Residue aspartate 69 is part of the active site. Position 101 (aspartate 101) interacts with Zn(2+). The active-site Proton acceptor is glutamate 135. Residues glutamate 136, glutamate 164, and histidine 353 each coordinate Zn(2+).

Belongs to the peptidase M20A family. DapE subfamily. Homodimer. The cofactor is Zn(2+). Requires Co(2+) as cofactor.

It catalyses the reaction N-succinyl-(2S,6S)-2,6-diaminopimelate + H2O = (2S,6S)-2,6-diaminopimelate + succinate. It functions in the pathway amino-acid biosynthesis; L-lysine biosynthesis via DAP pathway; LL-2,6-diaminopimelate from (S)-tetrahydrodipicolinate (succinylase route): step 3/3. Its function is as follows. Catalyzes the hydrolysis of N-succinyl-L,L-diaminopimelic acid (SDAP), forming succinate and LL-2,6-diaminopimelate (DAP), an intermediate involved in the bacterial biosynthesis of lysine and meso-diaminopimelic acid, an essential component of bacterial cell walls. This chain is Succinyl-diaminopimelate desuccinylase, found in Rickettsia bellii (strain RML369-C).